The primary structure comprises 365 residues: Serpentine receptor class epsilon-38 (365 aa).

Transmembrane regions (helical) follow at residues 26-46, 65-85, 124-144, 168-188, 196-216, 256-276, and 285-305; these read GMYL…GVII, IMTA…LLII, ALVI…FGIL, IPVF…YFVL, LGTS…LAVW, LVIV…CLVI, and IFIH…CSTL.

This sequence belongs to the nematode receptor-like protein sre family.

It localises to the membrane. The protein is Serpentine receptor class epsilon-38 (sre-38) of Caenorhabditis elegans.